Here is a 287-residue protein sequence, read N- to C-terminus: Probable endonuclease 4 (287 aa).

Zn(2+) is bound by residues histidine 69, histidine 109, glutamate 146, aspartate 180, histidine 183, histidine 217, aspartate 230, histidine 232, and glutamate 262.

It belongs to the AP endonuclease 2 family. Requires Zn(2+) as cofactor.

It catalyses the reaction Endonucleolytic cleavage to 5'-phosphooligonucleotide end-products.. In terms of biological role, endonuclease IV plays a role in DNA repair. It cleaves phosphodiester bonds at apurinic or apyrimidinic (AP) sites, generating a 3'-hydroxyl group and a 5'-terminal sugar phosphate. The sequence is that of Probable endonuclease 4 from Petrotoga mobilis (strain DSM 10674 / SJ95).